The sequence spans 915 residues: Translation initiation factor IF-2 (915 aa).

Disordered regions lie at residues 1 to 105 and 121 to 295; these read MSEG…RALT and VEAA…RAAI. The span at 57–81 shows a compositional bias: low complexity; that stretch reads PGTPSAPEGGSSSAPAPQSGNAPQG. Residues 84–101 show a composition bias toward gly residues; it reads RSGGGNRGSGRGGAGGAG. Composition is skewed to basic and acidic residues over residues 121-135 and 143-180; these read VEAA…EQEK and EEAR…RKAA. Over residues 186–195 the composition is skewed to pro residues; it reads AEAPPVPPPA. 2 stretches are compositionally biased toward low complexity: residues 201–213 and 230–239; these read AAPS…SRTA and KVPVAAPSAP. The span at 243–256 shows a compositional bias: basic and acidic residues; it reads RLRERGDEGEEERK. Residues 266–278 are compositionally biased toward low complexity; sequence PAPRKAAAPVAKK. A compositionally biased stretch (basic and acidic residues) spans 279-295; sequence AVAEPRRGGRIDVRAAI. The tr-type G domain maps to 414 to 584; the sequence is PRPPVVTVMG…LLQAEVLDLK (171 aa). A G1 region spans residues 423-430; that stretch reads GHVDHGKT. 423 to 430 contributes to the GTP binding site; sequence GHVDHGKT. The segment at 448 to 452 is G2; sequence GITQH. The segment at 470–473 is G3; that stretch reads DTPG. GTP contacts are provided by residues 470–474 and 524–527; these read DTPGH and NKCD. Positions 524–527 are G4; sequence NKCD. Positions 560 to 562 are G5; it reads SAL.

This sequence belongs to the TRAFAC class translation factor GTPase superfamily. Classic translation factor GTPase family. IF-2 subfamily.

It is found in the cytoplasm. Functionally, one of the essential components for the initiation of protein synthesis. Protects formylmethionyl-tRNA from spontaneous hydrolysis and promotes its binding to the 30S ribosomal subunits. Also involved in the hydrolysis of GTP during the formation of the 70S ribosomal complex. This chain is Translation initiation factor IF-2, found in Granulibacter bethesdensis (strain ATCC BAA-1260 / CGDNIH1).